The primary structure comprises 229 residues: Ribosome maturation factor RimM (229 aa).

The tract at residues Met-1 to Asp-39 is disordered. Positions Ala-148–Tyr-229 constitute a PRC barrel domain.

This sequence belongs to the RimM family. Binds ribosomal protein uS19.

It is found in the cytoplasm. In terms of biological role, an accessory protein needed during the final step in the assembly of 30S ribosomal subunit, possibly for assembly of the head region. Essential for efficient processing of 16S rRNA. May be needed both before and after RbfA during the maturation of 16S rRNA. It has affinity for free ribosomal 30S subunits but not for 70S ribosomes. The chain is Ribosome maturation factor RimM from Burkholderia thailandensis (strain ATCC 700388 / DSM 13276 / CCUG 48851 / CIP 106301 / E264).